We begin with the raw amino-acid sequence, 209 residues long: Imidazole glycerol phosphate synthase subunit HisH (209 aa).

The Glutamine amidotransferase type-1 domain occupies 3 to 209 (KIGLIDYGMG…WINWLKKNKF (207 aa)). Residue Cys-81 is the Nucleophile of the active site. Catalysis depends on residues His-185 and Glu-187.

Heterodimer of HisH and HisF.

It localises to the cytoplasm. It catalyses the reaction 5-[(5-phospho-1-deoxy-D-ribulos-1-ylimino)methylamino]-1-(5-phospho-beta-D-ribosyl)imidazole-4-carboxamide + L-glutamine = D-erythro-1-(imidazol-4-yl)glycerol 3-phosphate + 5-amino-1-(5-phospho-beta-D-ribosyl)imidazole-4-carboxamide + L-glutamate + H(+). The enzyme catalyses L-glutamine + H2O = L-glutamate + NH4(+). It participates in amino-acid biosynthesis; L-histidine biosynthesis; L-histidine from 5-phospho-alpha-D-ribose 1-diphosphate: step 5/9. IGPS catalyzes the conversion of PRFAR and glutamine to IGP, AICAR and glutamate. The HisH subunit catalyzes the hydrolysis of glutamine to glutamate and ammonia as part of the synthesis of IGP and AICAR. The resulting ammonia molecule is channeled to the active site of HisF. The chain is Imidazole glycerol phosphate synthase subunit HisH from Prochlorococcus marinus (strain NATL2A).